The chain runs to 457 residues: MAVGGAGSSRSVAPCCCCAVLLAAALLFSAPATTEAYDALDPNGNITIKWDVMSWTPDGYVAVVTMFNYQQFRHIQAPGWQLGWTWAKKEVIWSMVGAQTTEQGDCSKFKGGTPHCCKKDPTVVDLLPGTPYNMQIANCCKAGVINTFNQDPSNAASSFQISVGLAGTTNKTVKLPKNFTLKAPGPGYTCGRAMIVRPTKFFTGDGRRATQALMTWNVTCTYSQFLAQKTPSCCVSLSSFYNDTIVNCPTCSCGCQNNGTSPGSCVNENSPYLQSAIDGPGKWTGQPLVQCTSHMCPIRIHWHVKLNYKEYWRVKITITNFNYRMNYTQWNLVAQHPNFNNITQLFSFNYKPLTPYGSKINDTAMFWGVKFYNDLLMQAGPLGNAQSELLLRKDSKDFTFDKGWAFPHRVYFNGDNCVMPPPDAYPWLPNASPLTKQPLTLSVLVFSIVLATLLAYA.

A signal peptide spans 1–35; it reads MAVGGAGSSRSVAPCCCCAVLLAAALLFSAPATTE. Residues Asn-45, Asn-170, Asn-178, Asn-217, Asn-242, Asn-258, Asn-326, Asn-341, and Asn-361 are each glycosylated (N-linked (GlcNAc...) asparagine). Asn-430 carries the GPI-anchor amidated asparagine lipid modification. Positions 431-457 are cleaved as a propeptide — removed in mature form; that stretch reads ASPLTKQPLTLSVLVFSIVLATLLAYA. The chain crosses the membrane as a helical span at residues 437–457; sequence QPLTLSVLVFSIVLATLLAYA.

Belongs to the COBRA family.

The protein localises to the cell membrane. Involved in determining the orientation of cell expansion, probably by playing an important role in cellulose deposition. May act by recruiting cellulose synthesizing complexes to discrete positions on the cell surface. This Oryza sativa subsp. japonica (Rice) protein is COBRA-like protein 3 (BC1L4).